Here is a 568-residue protein sequence, read N- to C-terminus: Clathrin coat assembly protein AP180B (568 aa).

One can recognise an ENTH domain in the interval 1-127; it reads MSSLYTKLVK…EEYGRLGMDH (127 aa). A compositionally biased stretch (basic and acidic residues) spans 262–283; sequence HLREETKRQRGEPSEPQQDRKP. Positions 262-302 are disordered; it reads HLREETKRQRGEPSEPQQDRKPSTAISSTSSHNNNSNDKNK. Lys-282 is covalently cross-linked (Glycyl lysine isopeptide (Lys-Gly) (interchain with G-Cter in ubiquitin)). Low complexity predominate over residues 284–298; sequence STAISSTSSHNNNSN. The residue at position 449 (Thr-449) is a Phosphothreonine.

It belongs to the AP180 family. As to quaternary structure, interacts with PAN1 and the clathrin heavy and light chains CHC1 and CLC1.

It localises to the bud. It is found in the bud neck. The protein localises to the cell membrane. The protein resides in the cytoplasm. In terms of biological role, involved in endocytosis and clathrin cage assembly. The polypeptide is Clathrin coat assembly protein AP180B (YAP1802) (Saccharomyces cerevisiae (strain ATCC 204508 / S288c) (Baker's yeast)).